Consider the following 156-residue polypeptide: Small ribosomal subunit protein uS7c (156 aa).

The protein belongs to the universal ribosomal protein uS7 family. In terms of assembly, part of the 30S ribosomal subunit.

The protein resides in the plastid. The protein localises to the chloroplast. In terms of biological role, one of the primary rRNA binding proteins, it binds directly to 16S rRNA where it nucleates assembly of the head domain of the 30S subunit. The polypeptide is Small ribosomal subunit protein uS7c (rps7) (Zamia furfuracea (Cardboard cycad)).